Reading from the N-terminus, the 126-residue chain is Holo-[acyl-carrier-protein] synthase (126 aa).

D9 and E58 together coordinate Mg(2+).

This sequence belongs to the P-Pant transferase superfamily. AcpS family. Mg(2+) is required as a cofactor.

Its subcellular location is the cytoplasm. It catalyses the reaction apo-[ACP] + CoA = holo-[ACP] + adenosine 3',5'-bisphosphate + H(+). Transfers the 4'-phosphopantetheine moiety from coenzyme A to a Ser of acyl-carrier-protein. This chain is Holo-[acyl-carrier-protein] synthase, found in Salmonella newport (strain SL254).